Consider the following 144-residue polypeptide: Large ribosomal subunit protein uL15 (144 aa).

The segment at 1-54 (MRLNTLSPAEGSKKAGKRLGRGIGSGLGKTGGRGHKGQKSRSGGGVRRGFEGGQ) is disordered. The segment covering 21 to 31 (RGIGSGLGKTG) has biased composition (gly residues).

This sequence belongs to the universal ribosomal protein uL15 family. In terms of assembly, part of the 50S ribosomal subunit.

Its function is as follows. Binds to the 23S rRNA. The protein is Large ribosomal subunit protein uL15 of Escherichia coli (strain K12 / MC4100 / BW2952).